A 336-amino-acid polypeptide reads, in one-letter code: UPF0324 membrane protein PM1461 (336 aa).

10 helical membrane passes run 5–23 (TLFL…VNLL), 30–52 (LNAN…NTFY), 62–84 (GVIF…RLTL), 91–113 (GINA…LWLG), 123–140 (IVYL…AAIM), 153–175 (VSIA…PLMY), 221–238 (MIRV…SWLL), 250–271 (ISIP…FSLI), 275–297 (IVAW…LGLT), and 310–332 (PLIL…NVGI).

This sequence belongs to the UPF0324 family.

It localises to the cell membrane. In Pasteurella multocida (strain Pm70), this protein is UPF0324 membrane protein PM1461.